A 714-amino-acid polypeptide reads, in one-letter code: Zinc finger matrin-type protein 1 (714 aa).

The segment at Asn89–Phe119 adopts a Matrin-type 1 zinc-finger fold. A disordered region spans residues His172–Leu214. The Matrin-type 2 zinc-finger motif lies at Tyr230–His254. Residues Arg417–Ser434 are compositionally biased toward basic and acidic residues. Disordered stretches follow at residues Arg417 to Phe469 and Met571 to Phe714. Polar residues-rich tracts occupy residues Ala437–Ser446 and Leu575–Asn588. Over residues Ser609–Arg619 the composition is skewed to basic residues. 2 stretches are compositionally biased toward basic and acidic residues: residues His620 to Gln632 and Ser640 to Ala662. The segment covering Thr669–His678 has biased composition (basic residues).

The protein resides in the nucleus. In Mus musculus (Mouse), this protein is Zinc finger matrin-type protein 1 (Zmat1).